The following is a 156-amino-acid chain: MLRQFLVSTAVRRVVVPSMAQTRCASNLDKSEYTTPGEIVDYDDPPHIPVPEYPSRPDEPLETRKQRLLYQSRKRGMLENDLLLSTFVAKYLKSFTADQTAQYDDLINGVSNDWDIFYWATETKPTPPEFDTEIMRLLKEHVKNAEKVQRIRQPDL.

A mitochondrion-targeting transit peptide spans 1-24 (MLRQFLVSTAVRRVVVPSMAQTRC). A disordered region spans residues 35–62 (TPGEIVDYDDPPHIPVPEYPSRPDEPLE).

The protein belongs to the SDHAF2 family. As to quaternary structure, interacts with the flavoprotein subunit within the SDH catalytic dimer.

It localises to the mitochondrion matrix. Functionally, plays an essential role in the assembly of succinate dehydrogenase (SDH), an enzyme complex (also referred to as respiratory complex II) that is a component of both the tricarboxylic acid (TCA) cycle and the mitochondrial electron transport chain, and which couples the oxidation of succinate to fumarate with the reduction of ubiquinone (coenzyme Q) to ubiquinol. Required for flavinylation (covalent attachment of FAD) of the flavoprotein subunit of the SDH catalytic dimer. The sequence is that of Succinate dehydrogenase assembly factor 2-A, mitochondrial from Drosophila ananassae (Fruit fly).